The following is a 194-amino-acid chain: Small ribosomal subunit protein uS4c (194 aa).

The S4 RNA-binding domain occupies 82–143 (MRLDNILFRL…KERSKVLIQN (62 aa)).

It belongs to the universal ribosomal protein uS4 family. As to quaternary structure, part of the 30S ribosomal subunit. Contacts protein S5. The interaction surface between S4 and S5 is involved in control of translational fidelity.

The protein resides in the plastid. The protein localises to the chloroplast. In terms of biological role, one of the primary rRNA binding proteins, it binds directly to 16S rRNA where it nucleates assembly of the body of the 30S subunit. Its function is as follows. With S5 and S12 plays an important role in translational accuracy. The protein is Small ribosomal subunit protein uS4c (rps4) of Cypella sp. (strain Porto Alegre 027).